The following is a 137-amino-acid chain: Phosphoribosyl-AMP cyclohydrolase (137 aa).

Residue D84 participates in Mg(2+) binding. A Zn(2+)-binding site is contributed by C85. The Mg(2+) site is built by D86 and D88. Zn(2+) is bound by residues C101 and C108.

It belongs to the PRA-CH family. In terms of assembly, homodimer. Mg(2+) is required as a cofactor. The cofactor is Zn(2+).

The protein resides in the cytoplasm. It carries out the reaction 1-(5-phospho-beta-D-ribosyl)-5'-AMP + H2O = 1-(5-phospho-beta-D-ribosyl)-5-[(5-phospho-beta-D-ribosylamino)methylideneamino]imidazole-4-carboxamide. It functions in the pathway amino-acid biosynthesis; L-histidine biosynthesis; L-histidine from 5-phospho-alpha-D-ribose 1-diphosphate: step 3/9. Catalyzes the hydrolysis of the adenine ring of phosphoribosyl-AMP. The sequence is that of Phosphoribosyl-AMP cyclohydrolase from Prosthecochloris aestuarii (strain DSM 271 / SK 413).